The following is a 630-amino-acid chain: 1-deoxy-D-xylulose-5-phosphate synthase (630 aa).

Thiamine diphosphate is bound by residues H87 and G128–S130. D159 serves as a coordination point for Mg(2+). Thiamine diphosphate is bound by residues G160–A161, N188, F295, and E377. N188 lines the Mg(2+) pocket.

Belongs to the transketolase family. DXPS subfamily. As to quaternary structure, homodimer. Mg(2+) is required as a cofactor. Requires thiamine diphosphate as cofactor.

It carries out the reaction D-glyceraldehyde 3-phosphate + pyruvate + H(+) = 1-deoxy-D-xylulose 5-phosphate + CO2. The protein operates within metabolic intermediate biosynthesis; 1-deoxy-D-xylulose 5-phosphate biosynthesis; 1-deoxy-D-xylulose 5-phosphate from D-glyceraldehyde 3-phosphate and pyruvate: step 1/1. In terms of biological role, catalyzes the acyloin condensation reaction between C atoms 2 and 3 of pyruvate and glyceraldehyde 3-phosphate to yield 1-deoxy-D-xylulose-5-phosphate (DXP). The sequence is that of 1-deoxy-D-xylulose-5-phosphate synthase from Pseudomonas savastanoi pv. phaseolicola (strain 1448A / Race 6) (Pseudomonas syringae pv. phaseolicola (strain 1448A / Race 6)).